We begin with the raw amino-acid sequence, 429 residues long: Enolase (429 aa).

(2R)-2-phosphoglycerate is bound at residue Gln-162. Catalysis depends on Glu-204, which acts as the Proton donor. Positions 241, 283, and 310 each coordinate Mg(2+). The (2R)-2-phosphoglycerate site is built by Lys-335, Arg-364, Ser-365, and Lys-386. The Proton acceptor role is filled by Lys-335.

The protein belongs to the enolase family. Mg(2+) is required as a cofactor.

The protein localises to the cytoplasm. Its subcellular location is the secreted. It is found in the cell surface. The catalysed reaction is (2R)-2-phosphoglycerate = phosphoenolpyruvate + H2O. The protein operates within carbohydrate degradation; glycolysis; pyruvate from D-glyceraldehyde 3-phosphate: step 4/5. In terms of biological role, catalyzes the reversible conversion of 2-phosphoglycerate (2-PG) into phosphoenolpyruvate (PEP). It is essential for the degradation of carbohydrates via glycolysis. In Mycobacterium bovis (strain BCG / Pasteur 1173P2), this protein is Enolase.